A 351-amino-acid polypeptide reads, in one-letter code: UDP-3-O-acylglucosamine N-acyltransferase (351 aa).

His-240 (proton acceptor) is an active-site residue.

Belongs to the transferase hexapeptide repeat family. LpxD subfamily. In terms of assembly, homotrimer.

It carries out the reaction a UDP-3-O-[(3R)-3-hydroxyacyl]-alpha-D-glucosamine + a (3R)-hydroxyacyl-[ACP] = a UDP-2-N,3-O-bis[(3R)-3-hydroxyacyl]-alpha-D-glucosamine + holo-[ACP] + H(+). It participates in bacterial outer membrane biogenesis; LPS lipid A biosynthesis. Catalyzes the N-acylation of UDP-3-O-acylglucosamine using 3-hydroxyacyl-ACP as the acyl donor. Is involved in the biosynthesis of lipid A, a phosphorylated glycolipid that anchors the lipopolysaccharide to the outer membrane of the cell. This is UDP-3-O-acylglucosamine N-acyltransferase from Pseudomonas fluorescens (strain ATCC BAA-477 / NRRL B-23932 / Pf-5).